Consider the following 130-residue polypeptide: Small ribosomal subunit protein uS11 (130 aa).

Belongs to the universal ribosomal protein uS11 family. As to quaternary structure, part of the 30S ribosomal subunit. Interacts with proteins S7 and S18. Binds to IF-3.

Its function is as follows. Located on the platform of the 30S subunit, it bridges several disparate RNA helices of the 16S rRNA. Forms part of the Shine-Dalgarno cleft in the 70S ribosome. In Thiobacillus denitrificans (strain ATCC 25259 / T1), this protein is Small ribosomal subunit protein uS11.